Reading from the N-terminus, the 201-residue chain is dCTP deaminase, dUMP-forming (201 aa).

Residues 101–106 (KSSLGR), D119, 127–129 (TLE), Q148, Y162, and Q174 contribute to the dCTP site. Residue E129 is the Proton donor/acceptor of the active site.

Belongs to the dCTP deaminase family. As to quaternary structure, homotrimer.

It carries out the reaction dCTP + 2 H2O = dUMP + NH4(+) + diphosphate. It participates in pyrimidine metabolism; dUMP biosynthesis; dUMP from dCTP: step 1/1. Bifunctional enzyme that catalyzes both the deamination of dCTP to dUTP and the hydrolysis of dUTP to dUMP without releasing the toxic dUTP intermediate. The sequence is that of dCTP deaminase, dUMP-forming from Parafrankia sp. (strain EAN1pec).